Here is a 661-residue protein sequence, read N- to C-terminus: MNNFSIISEYKPAGDQPKAIDEIIAGLSSKKRSQMLLGITGSGKTFTMANIIERTNRPTLIMAHNKTLAAQIYSEMKSLFPKNAVEYFVSYYDYYQPEAYIARTDTFIEKDSSINEQIDLMRHAATRSLLERRDVIVVSSVSCIYGLGSPDLYYQMVVNLEPGQSYLRDQLLNDLINLQYERNDIGFERGCFRVKGDNIDIFPSHYSDKAWRLSFFGNELEYIHEFDPLTGEKLAKLDKAIVFGNSHFVMPQETVNNAISGIEEELQKRLEFLKSQDKPLETQRLNQRTQYDLEMLTETGSCKGVENYSRFFTGRNAGEPPPTLFEYLPEDALLFVDESHVSVPQIRAMYNGDRARKKVLVEHGFRLPSALDNRPLKFEEWDKFRPQTVFVSATPGPFELEETGGTVVELIIRPTGLLDPECIIKPATNQVEDLISEIQTTIAQGFRVLVTTLTKKMAEDLTAYLQELKYKTSYLHSNVHTLERIEILRDLRQGTIDVLVGINLLREGLDIPECGLVAILDADKEGFLRSEVSLIQTIGRAARNSAGRVILYADKMTKSIDKAVSETLRRRQIQQEYNEKHGIIPKTINRAIHALAEFEKIDSKLDKKQAHTLFDNPAKLKTHIDKLKKEMLKAASNLEFEQAVKLRDQLKTLEEAALELS.

The Helicase ATP-binding domain maps to 25–182 (AGLSSKKRSQ…NDLINLQYER (158 aa)). 38–45 (GITGSGKT) is an ATP binding site. A Beta-hairpin motif is present at residues 91–114 (YYDYYQPEAYIARTDTFIEKDSSI). The Helicase C-terminal domain occupies 430–592 (QVEDLISEIQ…IIPKTINRAI (163 aa)). The UVR domain maps to 621 to 656 (KTHIDKLKKEMLKAASNLEFEQAVKLRDQLKTLEEA).

This sequence belongs to the UvrB family. As to quaternary structure, forms a heterotetramer with UvrA during the search for lesions. Interacts with UvrC in an incision complex.

The protein localises to the cytoplasm. In terms of biological role, the UvrABC repair system catalyzes the recognition and processing of DNA lesions. A damage recognition complex composed of 2 UvrA and 2 UvrB subunits scans DNA for abnormalities. Upon binding of the UvrA(2)B(2) complex to a putative damaged site, the DNA wraps around one UvrB monomer. DNA wrap is dependent on ATP binding by UvrB and probably causes local melting of the DNA helix, facilitating insertion of UvrB beta-hairpin between the DNA strands. Then UvrB probes one DNA strand for the presence of a lesion. If a lesion is found the UvrA subunits dissociate and the UvrB-DNA preincision complex is formed. This complex is subsequently bound by UvrC and the second UvrB is released. If no lesion is found, the DNA wraps around the other UvrB subunit that will check the other stand for damage. The sequence is that of UvrABC system protein B from Rickettsia rickettsii (strain Sheila Smith).